An 841-amino-acid polypeptide reads, in one-letter code: Toll-like receptor 4 (841 aa).

The first 23 residues, 1 to 23, serve as a signal peptide directing secretion; sequence MIPRIRLAVATIPAMAFLSCLRS. The Extracellular portion of the chain corresponds to 24–632; it reads ESWDPCVQVV…FRNATCQISE (609 aa). Cys-29 and Cys-40 are oxidised to a cystine. The N-linked (GlcNAc...) asparagine glycan is linked to Asn-35. 7 LRR repeats span residues 55–76, 79–100, 103–124, 127–148, 151–172, 176–197, and 205–225; these read SVKI…SFSS, ELQV…AYQG, YLST…AFSG, SLQK…PIGH, TLNE…EYFS, NLEH…HLQV, and NLSL…AFNK. Residues Asn-205, Asn-238, Asn-282, and Asn-309 are each glycosylated (N-linked (GlcNAc...) asparagine). Residues Cys-281 and Cys-306 are joined by a disulfide bond. LRR repeat units lie at residues 374–395, 400–422, 423–444, 448–469, 472–495, 497–518, 521–542, and 545–568; these read NLQF…SHNE, KLKH…MGLE, QLEY…SIFL, NLHY…IFAG, SLQT…FTDL, NLIL…AFHS, RLQV…PYKP, and SLRI…QHLP. Cys-390 and Cys-391 form a disulfide bridge. Asn-526 carries N-linked (GlcNAc...) asparagine glycosylation. A glycan (N-linked (GlcNAc...) asparagine) is linked at Asn-575. Residues 579 to 630 enclose the LRRCT domain; sequence NDFSCACEHQTFLQWVKDQKQLLVGAEQMVCTQPLEMQDLPVLSFRNATCQI. 2 disulfides stabilise this stretch: Cys-583/Cys-609 and Cys-585/Cys-628. Asn-625 is a glycosylation site (N-linked (GlcNAc...) asparagine). The helical transmembrane segment at 633-653 threads the bilayer; sequence AVISASVLTFLLVSVAGILVY. Topologically, residues 654–841 are cytoplasmic; sequence KFYFHLLLFV…SNQHDTTAFT (188 aa). In terms of domain architecture, TIR spans 673–816; sequence STYDAFVIYS…IFWRRLKKAL (144 aa).

It belongs to the Toll-like receptor family. As to quaternary structure, belongs to the lipopolysaccharide (LPS) receptor, a multi-protein complex containing at least CD14, LY96 and TLR4. Binding to bacterial LPS leads to homodimerization. Interacts with LY96 via the extracellular domain. Interacts with MYD88 and TIRAP via their respective TIR domains. Interacts with NOX4. Interacts with CNPY3 and HSP90B1; this interaction is required for proper folding in the endoplasmic reticulum. Interacts with MAP3K21; this interaction leads to negative regulation of TLR4 signaling. Interacts with CD36, following CD36 stimulation by oxLDL or amyloid-beta 42, and forms a heterodimer with TLR6. The trimeric complex is internalized and triggers inflammatory response. LYN kinase activity facilitates TLR4-TLR6 heterodimerization and signal initiation. Interacts with TICAM1 in response to LPS in a WDFY1-dependent manner. Interacts with WDFY1 in response to LPS. Interacts with SMPDL3B. Interacts with CEACAM1; upon lipopolysaccharide stimulation, forms a complex including TLR4 and the phosphorylated form of SYK and CEACAM1, which in turn, recruits PTPN6 that dephosphorylates SYK, reducing the production of reactive oxygen species (ROS) and lysosome disruption, which in turn, reduces the activity of the inflammasome. Interacts with RFTN1; the interaction occurs in response to lipopolysaccharide stimulation. Interacts with SCIMP; the interaction occurs in response to lipopolysaccharide stimulation and is enhanced by phosphorylation of SCIMP by LYN. This interaction facilitates the phosphorylation of TLR4 by LYN which elicits a selective cytokine response in macrophages. Interacts with TRAF3IP3. Interacts with TREM1; this interaction enhances TLR4-mediated inflammatory response. Interacts with ZG16B/PAUF. Interacts with CD82; this interaction inhibits TLR4-mediated signaling pathway. In terms of processing, phosphorylated on tyrosine residues by LYN after binding lipopolysaccharide. Post-translationally, ubiquitinated by RNF128 via 'Lys-28'-linked polyubiquitin chains, leading to proteasomal degradation.

It localises to the cell membrane. The protein resides in the early endosome. The protein localises to the cell projection. Its subcellular location is the ruffle. In terms of biological role, transmembrane receptor that functions as a pattern recognition receptor recognizing pathogen- and damage-associated molecular patterns (PAMPs and DAMPs) to induce innate immune responses via downstream signaling pathways. At the plasma membrane, cooperates with LY96 to mediate the innate immune response to bacterial lipopolysaccharide (LPS). Also involved in LPS-independent inflammatory responses triggered by free fatty acids, such as palmitate, and Ni(2+). Mechanistically, acts via MYD88, TIRAP and TRAF6, leading to NF-kappa-B activation, cytokine secretion and the inflammatory response. Alternatively, CD14-mediated TLR4 internalization via endocytosis is associated with the initiation of a MYD88-independent signaling via the TICAM1-TBK1-IRF3 axis leading to type I interferon production. In addition to the secretion of proinflammatory cytokines, initiates the activation of NLRP3 inflammasome and formation of a positive feedback loop between autophagy and NF-kappa-B signaling cascade. In complex with TLR6, promotes inflammation in monocytes/macrophages by associating with TLR6 and the receptor CD86. Upon ligand binding, such as oxLDL or amyloid-beta 42, the TLR4:TLR6 complex is internalized and triggers inflammatory response, leading to NF-kappa-B-dependent production of CXCL1, CXCL2 and CCL9 cytokines, via MYD88 signaling pathway, and CCL5 cytokine, via TICAM1 signaling pathway. In myeloid dendritic cells, vesicular stomatitis virus glycoprotein G but not LPS promotes the activation of IRF7, leading to type I IFN production in a CD14-dependent manner. The polypeptide is Toll-like receptor 4 (TLR4) (Sus scrofa (Pig)).